A 461-amino-acid chain; its full sequence is Juvenile hormone epoxide hydrolase (461 aa).

A helical transmembrane segment spans residues 4 to 24 (LLFIALPLLVLASIPLYLLVL). Catalysis depends on Asp-227, which acts as the Nucleophile. Tyr-373 functions as the Proton donor in the catalytic mechanism. Residue His-430 is the Proton acceptor of the active site.

This sequence belongs to the peptidase S33 family. As to quaternary structure, homodimer. As to expression, expressed in fat body, foregut and midgut but not in brain, subesophageal ganglia or silk gland of larvae on day 1 of fifth instar.

It localises to the microsome membrane. The protein resides in the endoplasmic reticulum membrane. The enzyme catalyses cis-stilbene oxide + H2O = (1R,2R)-hydrobenzoin. It catalyses the reaction 1-(4-methoxyphenyl)-N-methyl-N-[(3-methyloxetan-3-yl)methyl]methanamine + H2O = 2-{[(4-methoxybenzyl)(methyl)amino]methyl}-2-methylpropane-1,3-diol. Functionally, catalyzes juvenile hormone hydrolysis. Degrades juvenile hormone III (JH III) about 3 times and 5 times slower than juvenile hormone I (JH I) and II (JH II), respectively. Degrades cis-stilbene oxide and trans-stilbene oxide about 18 and 43 times slower than JH III, respectively. In Bombyx mori (Silk moth), this protein is Juvenile hormone epoxide hydrolase.